The chain runs to 135 residues: uncharacterized protein (135 aa).

A disordered region spans residues 1–36 (MSHAEKPMSDSVNHHHHRTFEVLTAEPVRSRRKPRH).

This sequence belongs to the transposase 8 family.

This is an uncharacterized protein from Sinorhizobium fredii (strain NBRC 101917 / NGR234).